The primary structure comprises 319 residues: Lipoyl synthase (319 aa).

The disordered stretch occupies residues 6-29 (DTVSANPVRPRHPEKAARPDALSP). Positions 16–29 (RHPEKAARPDALSP) are enriched in basic and acidic residues. 7 residues coordinate [4Fe-4S] cluster: cysteine 61, cysteine 66, cysteine 72, cysteine 87, cysteine 91, cysteine 94, and serine 300. The Radical SAM core domain occupies 73–289 (WDKKHATFMI…QTTAYAKGFL (217 aa)).

The protein belongs to the radical SAM superfamily. Lipoyl synthase family. [4Fe-4S] cluster serves as cofactor.

Its subcellular location is the cytoplasm. It catalyses the reaction [[Fe-S] cluster scaffold protein carrying a second [4Fe-4S](2+) cluster] + N(6)-octanoyl-L-lysyl-[protein] + 2 oxidized [2Fe-2S]-[ferredoxin] + 2 S-adenosyl-L-methionine + 4 H(+) = [[Fe-S] cluster scaffold protein] + N(6)-[(R)-dihydrolipoyl]-L-lysyl-[protein] + 4 Fe(3+) + 2 hydrogen sulfide + 2 5'-deoxyadenosine + 2 L-methionine + 2 reduced [2Fe-2S]-[ferredoxin]. It functions in the pathway protein modification; protein lipoylation via endogenous pathway; protein N(6)-(lipoyl)lysine from octanoyl-[acyl-carrier-protein]: step 2/2. Its function is as follows. Catalyzes the radical-mediated insertion of two sulfur atoms into the C-6 and C-8 positions of the octanoyl moiety bound to the lipoyl domains of lipoate-dependent enzymes, thereby converting the octanoylated domains into lipoylated derivatives. In Rhodopseudomonas palustris (strain ATCC BAA-98 / CGA009), this protein is Lipoyl synthase.